A 199-amino-acid chain; its full sequence is dITP/XTP pyrophosphatase (199 aa).

7–12 provides a ligand contact to substrate; sequence TGNKGK. Asp71 acts as the Proton acceptor in catalysis. Residue Asp71 participates in Mg(2+) binding. Residues Ala72, 154–157, Lys177, and 182–183 contribute to the substrate site; these read FGYD and HR.

The protein belongs to the HAM1 NTPase family. Homodimer. Mg(2+) is required as a cofactor.

It carries out the reaction XTP + H2O = XMP + diphosphate + H(+). It catalyses the reaction dITP + H2O = dIMP + diphosphate + H(+). The catalysed reaction is ITP + H2O = IMP + diphosphate + H(+). Pyrophosphatase that catalyzes the hydrolysis of nucleoside triphosphates to their monophosphate derivatives, with a high preference for the non-canonical purine nucleotides XTP (xanthosine triphosphate), dITP (deoxyinosine triphosphate) and ITP. Seems to function as a house-cleaning enzyme that removes non-canonical purine nucleotides from the nucleotide pool, thus preventing their incorporation into DNA/RNA and avoiding chromosomal lesions. This Bdellovibrio bacteriovorus (strain ATCC 15356 / DSM 50701 / NCIMB 9529 / HD100) protein is dITP/XTP pyrophosphatase.